Consider the following 217-residue polypeptide: MAAGSWTSLLLAFTLLCLPQLREAGAFPTIPLSRLLDNAMLRAHRLHQLAFDTYQEFEEAYIPKEQKYSFLQNPQTSLCFSESIPTPASKKETQQKSNLELLRMSLLLIQSWFEPVQFLRSVFANSLLYGVSDSDVYEYLKDLEEGIQTLMGRLEDGSPRTGEIFMQTYRKFDVNSQNNDALLKNYGLLYCFRKDMDKVETFLRIVQCRSVEGSCGF.

The first 24 residues, 1–24 (MAAGSWTSLLLAFTLLCLPQLREA), serve as a signal peptide directing secretion. Position 44 (H44) interacts with Zn(2+). An intrachain disulfide couples C79 to C191. Position 132 is a phosphoserine (S132). A Zn(2+)-binding site is contributed by E200. A disulfide bridge links C208 with C215.

Belongs to the somatotropin/prolactin family.

It is found in the secreted. Plays an important role in growth control. Its major role in stimulating body growth is to stimulate the liver and other tissues to secrete IGF1. It stimulates both the differentiation and proliferation of myoblasts. It also stimulates amino acid uptake and protein synthesis in muscle and other tissues. This Callithrix jacchus (White-tufted-ear marmoset) protein is Somatotropin (GH1).